Reading from the N-terminus, the 183-residue chain is MTEDNKKQRLIWIDLEMTGLEPDENHIIEVATIVTDAQLNTLAEGPVIAVHQPQKHLDRMDDWNVKTHTGSGLVERVKESQHDERKAAAETIEFLRQYIDAGVSPMCGNSICQDRRFLAKHMPELEAFFHYRNLDVSTLKELAKRWNPEVANSFKKSGAHEALADIRESIAELQHYREHFFSK.

The region spanning leucine 10–leucine 173 is the Exonuclease domain. Tyrosine 131 is a catalytic residue.

The protein belongs to the oligoribonuclease family.

Its subcellular location is the cytoplasm. 3'-to-5' exoribonuclease specific for small oligoribonucleotides. The chain is Oligoribonuclease from Idiomarina loihiensis (strain ATCC BAA-735 / DSM 15497 / L2-TR).